The primary structure comprises 429 residues: Glutamate-1-semialdehyde 2,1-aminomutase (429 aa).

Lysine 265 bears the N6-(pyridoxal phosphate)lysine mark.

This sequence belongs to the class-III pyridoxal-phosphate-dependent aminotransferase family. HemL subfamily. Homodimer. The cofactor is pyridoxal 5'-phosphate.

The protein resides in the cytoplasm. It catalyses the reaction (S)-4-amino-5-oxopentanoate = 5-aminolevulinate. It functions in the pathway porphyrin-containing compound metabolism; protoporphyrin-IX biosynthesis; 5-aminolevulinate from L-glutamyl-tRNA(Glu): step 2/2. The protein is Glutamate-1-semialdehyde 2,1-aminomutase of Legionella pneumophila (strain Lens).